We begin with the raw amino-acid sequence, 185 residues long: TRAF-interacting protein with FHA domain-containing protein A (185 aa).

Threonine 9 is modified (phosphothreonine). An FHA domain is found at 48-104 (VKFGRNSNMCQYTFQDKQVSRVQFALQPFKQFNSSVLSFEIKNMSKKTSLMVDNQEL).

The protein belongs to the TIFA family. Homooligomer; homooligomerizes following phosphorylation at Thr-9. Interacts with IRAK1, TRAF2 and TRAF6. Interacts with TIFAB; binding to TIFAB inhibits TRAF6 activation, possibly by inducing a conformational change in TIFA. Interacts with ZCCHC11; binding to ZCCHC11 suppresses the TRAF6-dependent activation of NF-kappa-B. In terms of processing, phosphorylated at Thr-9 following detection of ADP-D-glycero-beta-D-manno-heptose (ADP-Heptose) by ALPK1. Phosphorylation at Thr-9 by ALPK1 leads to the formation of an intermolecular binding between the FHA domain and phosphorylated Thr-9, promoting TIFA oligomerization and TIFA-mediated NF-kappa-B activation.

The protein localises to the cytoplasm. In terms of biological role, adapter molecule that plays a key role in the activation of pro-inflammatory NF-kappa-B signaling following detection of bacterial pathogen-associated molecular pattern metabolites (PAMPs). Promotes activation of an innate immune response by inducing the oligomerization and polyubiquitination of TRAF6, which leads to the activation of TAK1 and IKK through a proteasome-independent mechanism. TIFA-dependent innate immune response is triggered by ADP-D-glycero-beta-D-manno-heptose (ADP-Heptose), a potent PAMP present in all Gram-negative and some Gram-positive bacteria: ADP-Heptose is recognized by ALPK1, which phosphorylates TIFA at Thr-9, leading to TIFA homooligomerization and subsequent activation of pro-inflammatory NF-kappa-B signaling. This is TRAF-interacting protein with FHA domain-containing protein A from Rattus norvegicus (Rat).